The following is a 471-amino-acid chain: Probable multidrug-efflux transporter MT1670 (471 aa).

14 helical membrane passes run 23 to 43, 55 to 75, 91 to 111, 116 to 136, 146 to 166, 174 to 194, 213 to 233, 237 to 257, 279 to 299, 308 to 328, 337 to 357, 366 to 386, 410 to 430, and 438 to 458; these read IVLA…ISLL, LYAW…TTVN, LAVF…QILV, LQGI…NSTL, ALVS…GGLF, WAFG…PVAL, VPVW…VAAL, LVQT…FVVV, IYLT…VPLF, PVAA…GEVA, VIGH…ALGA, VGII…IGIA, AINV…GVVV, and VAAA…GVIA.

It belongs to the major facilitator superfamily.

The protein resides in the cell membrane. Could be involved in fluoroquinolones efflux. This Mycobacterium tuberculosis (strain CDC 1551 / Oshkosh) protein is Probable multidrug-efflux transporter MT1670.